Consider the following 325-residue polypeptide: Beta-ketoacyl-[acyl-carrier-protein] synthase III (325 aa).

Residues C112 and H250 contribute to the active site. An ACP-binding region spans residues 251 to 255; that stretch reads QANIR. The active site involves N280.

This sequence belongs to the thiolase-like superfamily. FabH family. As to quaternary structure, homodimer.

Its subcellular location is the cytoplasm. It carries out the reaction malonyl-[ACP] + acetyl-CoA + H(+) = 3-oxobutanoyl-[ACP] + CO2 + CoA. Its pathway is lipid metabolism; fatty acid biosynthesis. Functionally, catalyzes the condensation reaction of fatty acid synthesis by the addition to an acyl acceptor of two carbons from malonyl-ACP. Catalyzes the first condensation reaction which initiates fatty acid synthesis and may therefore play a role in governing the total rate of fatty acid production. Possesses both acetoacetyl-ACP synthase and acetyl transacylase activities. Its substrate specificity determines the biosynthesis of branched-chain and/or straight-chain of fatty acids. The protein is Beta-ketoacyl-[acyl-carrier-protein] synthase III of Clostridium acetobutylicum (strain ATCC 824 / DSM 792 / JCM 1419 / IAM 19013 / LMG 5710 / NBRC 13948 / NRRL B-527 / VKM B-1787 / 2291 / W).